A 50-amino-acid chain; its full sequence is Insulin (50 aa).

Intrachain disulfides connect cysteine 7–cysteine 36, cysteine 19–cysteine 49, and cysteine 35–cysteine 40.

It belongs to the insulin family. As to quaternary structure, heterodimer of a B chain and an A chain linked by two disulfide bonds.

The protein resides in the secreted. Its function is as follows. Insulin decreases blood glucose concentration. It increases cell permeability to monosaccharides, amino acids and fatty acids. It accelerates glycolysis, the pentose phosphate cycle, and glycogen synthesis in liver. The chain is Insulin (INS) from Proechimys guairae (Guaira spiny rat).